Reading from the N-terminus, the 255-residue chain is 4-hydroxy-tetrahydrodipicolinate reductase (255 aa).

Residues 9 to 14 (GFKGKM), 89 to 91 (GTT), and 115 to 118 (APNF) each bind NAD(+). Residue His145 is the Proton donor/acceptor of the active site. His146 provides a ligand contact to (S)-2,3,4,5-tetrahydrodipicolinate. The active-site Proton donor is the Lys149. Residue 155–156 (GT) coordinates (S)-2,3,4,5-tetrahydrodipicolinate.

The protein belongs to the DapB family.

It is found in the cytoplasm. The catalysed reaction is (S)-2,3,4,5-tetrahydrodipicolinate + NAD(+) + H2O = (2S,4S)-4-hydroxy-2,3,4,5-tetrahydrodipicolinate + NADH + H(+). The enzyme catalyses (S)-2,3,4,5-tetrahydrodipicolinate + NADP(+) + H2O = (2S,4S)-4-hydroxy-2,3,4,5-tetrahydrodipicolinate + NADPH + H(+). The protein operates within amino-acid biosynthesis; L-lysine biosynthesis via DAP pathway; (S)-tetrahydrodipicolinate from L-aspartate: step 4/4. Functionally, catalyzes the conversion of 4-hydroxy-tetrahydrodipicolinate (HTPA) to tetrahydrodipicolinate. The protein is 4-hydroxy-tetrahydrodipicolinate reductase of Streptococcus sanguinis (strain SK36).